Here is a 238-residue protein sequence, read N- to C-terminus: tRNA (guanine-N(7)-)-methyltransferase (238 aa).

S-adenosyl-L-methionine is bound by residues Glu68, Glu93, Asp120, and Asp143. Asp143 is an active-site residue. Residues Lys147, Asp179, and 216 to 219 (TKFE) contribute to the substrate site.

Belongs to the class I-like SAM-binding methyltransferase superfamily. TrmB family.

The catalysed reaction is guanosine(46) in tRNA + S-adenosyl-L-methionine = N(7)-methylguanosine(46) in tRNA + S-adenosyl-L-homocysteine. It participates in tRNA modification; N(7)-methylguanine-tRNA biosynthesis. Catalyzes the formation of N(7)-methylguanine at position 46 (m7G46) in tRNA. In Shewanella baltica (strain OS223), this protein is tRNA (guanine-N(7)-)-methyltransferase.